We begin with the raw amino-acid sequence, 305 residues long: Cell division control protein 2 homolog C (305 aa).

The 294-residue stretch at 4–297 (YEKLEKVGEG…AKAALDHPYF (294 aa)) folds into the Protein kinase domain. Residues 10 to 18 (VGEGTYGKV) and Lys-33 each bind ATP. Position 14 is a phosphothreonine (Thr-14). Tyr-15 carries the phosphotyrosine modification. Asp-138 serves as the catalytic Proton acceptor. Thr-172 is subject to Phosphothreonine; by CAK.

It belongs to the protein kinase superfamily. CMGC Ser/Thr protein kinase family. CDC2/CDKX subfamily.

The enzyme catalyses L-seryl-[protein] + ATP = O-phospho-L-seryl-[protein] + ADP + H(+). It catalyses the reaction L-threonyl-[protein] + ATP = O-phospho-L-threonyl-[protein] + ADP + H(+). It carries out the reaction [DNA-directed RNA polymerase] + ATP = phospho-[DNA-directed RNA polymerase] + ADP + H(+). Plays a key role in the control of the eukaryotic cell cycle. This is Cell division control protein 2 homolog C (CDC2C) from Antirrhinum majus (Garden snapdragon).